A 223-amino-acid chain; its full sequence is Pyridoxal phosphate homeostasis protein (223 aa).

K36 carries the post-translational modification N6-(pyridoxal phosphate)lysine.

It belongs to the pyridoxal phosphate-binding protein YggS/PROSC family. In terms of assembly, monomer.

Functionally, pyridoxal 5'-phosphate (PLP)-binding protein, which is involved in PLP homeostasis. This is Pyridoxal phosphate homeostasis protein from Buchnera aphidicola subsp. Baizongia pistaciae (strain Bp).